Consider the following 180-residue polypeptide: Der GTPase-activating protein YihI (180 aa).

Disordered stretches follow at residues 1 to 90 and 145 to 180; these read MSRK…QERR and EPEE…DYKG. Positions 23-32 are enriched in basic and acidic residues; the sequence is NRTESDVEGR. The span at 33–43 shows a compositional bias: basic residues; sequence LRKRAKKRKGL. 2 stretches are compositionally biased toward basic and acidic residues: residues 50–68 and 80–90; these read SDAE…DPRL and PVKKQTKQERR. The span at 165–180 shows a compositional bias: acidic residues; sequence DLLADFDDINFDDYKG.

This sequence belongs to the YihI family. Interacts with Der.

Functionally, a GTPase-activating protein (GAP) that modifies Der/EngA GTPase function. May play a role in ribosome biogenesis. The sequence is that of Der GTPase-activating protein YihI from Vibrio campbellii (strain ATCC BAA-1116).